An 89-amino-acid polypeptide reads, in one-letter code: Small ribosomal subunit protein uS19 (89 aa).

The protein belongs to the universal ribosomal protein uS19 family.

Protein S19 forms a complex with S13 that binds strongly to the 16S ribosomal RNA. This is Small ribosomal subunit protein uS19 from Brachyspira hyodysenteriae (strain ATCC 49526 / WA1).